Here is a 543-residue protein sequence, read N- to C-terminus: Chaperonin GroEL (543 aa).

ATP contacts are provided by residues 29 to 32 (TVGP), 86 to 90 (DGTTT), Gly-413, and Asp-504.

This sequence belongs to the chaperonin (HSP60) family. Forms a cylinder of 14 subunits composed of two heptameric rings stacked back-to-back. Interacts with the co-chaperonin GroES.

It localises to the cytoplasm. It carries out the reaction ATP + H2O + a folded polypeptide = ADP + phosphate + an unfolded polypeptide.. Together with its co-chaperonin GroES, plays an essential role in assisting protein folding. The GroEL-GroES system forms a nano-cage that allows encapsulation of the non-native substrate proteins and provides a physical environment optimized to promote and accelerate protein folding. The polypeptide is Chaperonin GroEL (Mycoplasma genitalium (strain ATCC 33530 / DSM 19775 / NCTC 10195 / G37) (Mycoplasmoides genitalium)).